The chain runs to 257 residues: NAD-capped RNA hydrolase NudC (257 aa).

Substrate-binding residues include Lys27 and Arg71. Zn(2+) contacts are provided by Cys100 and Cys103. Glu113 is a binding site for substrate. The Zn(2+) site is built by Cys118 and Cys121. Tyr126 is a binding site for substrate. In terms of domain architecture, Nudix hydrolase spans 127 to 251 (PQIAPCIIVG…IARRLIEDTI (125 aa)). Residues Ala160, Glu176, and Glu180 each coordinate a divalent metal cation. Residues 161-182 (GFVEVGETLEEAVVREVMEESN) carry the Nudix box motif. Position 194 to 201 (194 to 201 (QPWPFPHS)) interacts with substrate. Glu221 lines the a divalent metal cation pocket. Ala243 lines the substrate pocket.

Belongs to the Nudix hydrolase family. NudC subfamily. Homodimer. It depends on Mg(2+) as a cofactor. Requires Mn(2+) as cofactor. Zn(2+) serves as cofactor.

It catalyses the reaction a 5'-end NAD(+)-phospho-ribonucleoside in mRNA + H2O = a 5'-end phospho-adenosine-phospho-ribonucleoside in mRNA + beta-nicotinamide D-ribonucleotide + 2 H(+). The catalysed reaction is NAD(+) + H2O = beta-nicotinamide D-ribonucleotide + AMP + 2 H(+). The enzyme catalyses NADH + H2O = reduced beta-nicotinamide D-ribonucleotide + AMP + 2 H(+). MRNA decapping enzyme that specifically removes the nicotinamide adenine dinucleotide (NAD) cap from a subset of mRNAs by hydrolyzing the diphosphate linkage to produce nicotinamide mononucleotide (NMN) and 5' monophosphate mRNA. The NAD-cap is present at the 5'-end of some mRNAs and stabilizes RNA against 5'-processing. Has preference for mRNAs with a 5'-end purine. Catalyzes the hydrolysis of a broad range of dinucleotide pyrophosphates. This is NAD-capped RNA hydrolase NudC from Photorhabdus laumondii subsp. laumondii (strain DSM 15139 / CIP 105565 / TT01) (Photorhabdus luminescens subsp. laumondii).